Here is a 428-residue protein sequence, read N- to C-terminus: Adenylosuccinate synthetase (428 aa).

Residues Gly-12 to Lys-18 and Gly-40 to Thr-42 each bind GTP. Asp-13 acts as the Proton acceptor in catalysis. Residues Asp-13 and Gly-40 each contribute to the Mg(2+) site. IMP is bound by residues Asp-13–Lys-16, Asn-38–His-41, Thr-128, Arg-142, Gln-223, Thr-238, and Arg-302. Residue His-41 is the Proton donor of the active site. Position 298-304 (Thr-298–Arg-304) interacts with substrate. GTP is bound by residues Arg-304, Lys-330–Asp-332, and Ser-412–Gly-414.

It belongs to the adenylosuccinate synthetase family. As to quaternary structure, homodimer. It depends on Mg(2+) as a cofactor.

Its subcellular location is the cytoplasm. It carries out the reaction IMP + L-aspartate + GTP = N(6)-(1,2-dicarboxyethyl)-AMP + GDP + phosphate + 2 H(+). Its pathway is purine metabolism; AMP biosynthesis via de novo pathway; AMP from IMP: step 1/2. Plays an important role in the de novo pathway of purine nucleotide biosynthesis. Catalyzes the first committed step in the biosynthesis of AMP from IMP. This is Adenylosuccinate synthetase from Desulforamulus reducens (strain ATCC BAA-1160 / DSM 100696 / MI-1) (Desulfotomaculum reducens).